Reading from the N-terminus, the 526-residue chain is UDP-glycosyltransferase UGT5 (526 aa).

At 1 to 474 (MIFFYFLTLT…TAAVDMPWYQ (474 aa)) the chain is on the lumenal side. Residues asparagine 49, asparagine 124, and asparagine 283 are each glycosylated (N-linked (GlcNAc...) asparagine). The chain crosses the membrane as a helical span at residues 475 to 495 (YLLLDVIAFLIFILVSVILII). Topologically, residues 496 to 526 (YYGVKISLRYLCALIFGNSSSLKPTKKVKDN) are cytoplasmic.

Belongs to the UDP-glycosyltransferase family.

It localises to the microsome membrane. In terms of biological role, catalyzes the transfer of a glycosyl group from a UDP-sugar to an acceptor molecule. This chain is UDP-glycosyltransferase UGT5, found in Dactylopius coccus (Cochineal).